The chain runs to 429 residues: MIELDINASDKSLSHRAVIFSLLAQKPCFVRNFLMGEDCLSSLEIAQNLGAKVENTAKNSFKITPPTAIKEPSKILNCNNSGTSMRLYSGLLSAQKGLFVLSGDNSLNARPMKRIIEPLKAFGARILGREDNHFAPLVIVGSPLKACNYESPIASAQVKSAFVLSALQAQGVSVYKENELSRNHTEIMLKSLGAKIHNQDGVLMISPLEKPLEAFDFTIANDPSSAFFFALACAITPKSRLLLKNVLLNPTRIEAFEALKKMGASIEYVIQSKDLEMIGDIYVEHAPLKAISIEQNIASLIDEIPALSIAMLFAKGKSMVKNAKDLRVKESDRIKAVISNFKALGIECEEFEDGFYIEGLEDISPLKQRFSQKKPPLIKSFNDHRIAMSFAILTLALPLEIDNLECANISFPQFKRLLNLFKKGSFNGN.

3 residues coordinate 3-phosphoshikimate: lysine 11, serine 12, and arginine 16. Lysine 11 contacts phosphoenolpyruvate. Residues glycine 82 and arginine 110 each contribute to the phosphoenolpyruvate site. Residues serine 155, glutamine 157, aspartate 302, and lysine 329 each coordinate 3-phosphoshikimate. A phosphoenolpyruvate-binding site is contributed by glutamine 157. Catalysis depends on aspartate 302, which acts as the Proton acceptor. Residues arginine 333 and arginine 385 each contribute to the phosphoenolpyruvate site.

It belongs to the EPSP synthase family. As to quaternary structure, monomer.

The protein localises to the cytoplasm. The catalysed reaction is 3-phosphoshikimate + phosphoenolpyruvate = 5-O-(1-carboxyvinyl)-3-phosphoshikimate + phosphate. Its pathway is metabolic intermediate biosynthesis; chorismate biosynthesis; chorismate from D-erythrose 4-phosphate and phosphoenolpyruvate: step 6/7. Its function is as follows. Catalyzes the transfer of the enolpyruvyl moiety of phosphoenolpyruvate (PEP) to the 5-hydroxyl of shikimate-3-phosphate (S3P) to produce enolpyruvyl shikimate-3-phosphate and inorganic phosphate. The sequence is that of 3-phosphoshikimate 1-carboxyvinyltransferase from Helicobacter pylori (strain HPAG1).